The chain runs to 276 residues: Large ribosomal subunit protein uL2 (276 aa).

Residues 224–276 (AMNPIDHPHGGGEGKTSGGRNPVTPWGVPTKGKKTRKRNKSSNKYIKRVSDKG) are disordered. A compositionally biased stretch (basic residues) spans 254-270 (KGKKTRKRNKSSNKYIK).

Belongs to the universal ribosomal protein uL2 family. In terms of assembly, part of the 50S ribosomal subunit. Forms a bridge to the 30S subunit in the 70S ribosome.

In terms of biological role, one of the primary rRNA binding proteins. Required for association of the 30S and 50S subunits to form the 70S ribosome, for tRNA binding and peptide bond formation. It has been suggested to have peptidyltransferase activity; this is somewhat controversial. Makes several contacts with the 16S rRNA in the 70S ribosome. The polypeptide is Large ribosomal subunit protein uL2 (Ehrlichia chaffeensis (strain ATCC CRL-10679 / Arkansas)).